A 90-amino-acid polypeptide reads, in one-letter code: Mu-theraphotoxin-Phlo1b (90 aa).

Residues 1-22 (MKVSVLITLAVLGVMFVWTSAA) form the signal peptide. The propeptide occupies 23-50 (EQEDHGSDRRDSPALLKSLGRVFQSEER). 3 disulfides stabilise this stretch: C52/C66, C59/C71, and C65/C79. Position 85 is a phenylalanine amide (F85). A propeptide spanning residues 86-90 (GNEKS) is cleaved from the precursor.

This sequence belongs to the neurotoxin 10 (Hwtx-1) family. 39 (Jztx-34) subfamily. As to expression, expressed by the venom gland.

Its subcellular location is the secreted. Its function is as follows. Gating-modifier toxin that inhibits voltage-gated sodium channel Nav by shifting the threshold for channel activation to more positive potentials. This toxin moderately inhibits human Nav1.7/SCN9A (IC(50)=360 nM) and weakly inhibits hNav1.2/SCN2A (37% inhibition at 1 uM peptide) and hNav1.5/SCN5A (&lt;20% inhibition at 1 uM peptide). Inhibition of Nav1.7 is voltage-dependent, with lower inhibition at more positive test pulses. This is Mu-theraphotoxin-Phlo1b from Phlogius sp. (Tarantula spider).